The primary structure comprises 338 residues: MKPSGAFLSLCVVLLSLATHCFSFPSDSLRRDAHSDTNALKSRDRRQAPAPQLSCGGVLYNPAAEMCCHGNVEPRVGASPMCCESSSYDPSTQMCCEGTVSNKPPGIAMCCGSEAYDANSQICCNGNINTKATGPTAQPGCCGEFSYDAASQLCCDSHPVLMVGSLPSCCGRNGYDANTSLCCGDNNVAFVSGPQAACCGDMGYNRNTHLCCDSNVLPMPAMGACCGSWTYSQQTHLCCEGVQLYKGMNTGCCGAVGYNQVNSLCCEGTVVPKSPSKPVCCGTTSYNPLTELCCDGIAFFKTGFIRPTCCGGAIYDATVARCCDGVPTYNVASCAGLA.

Residues 1–23 form the signal peptide; sequence MKPSGAFLSLCVVLLSLATHCFS. A compositionally biased stretch (basic and acidic residues) spans 30-47; that stretch reads RRDAHSDTNALKSRDRRQ. Residues 30-50 are disordered; that stretch reads RRDAHSDTNALKSRDRRQAPA.

In terms of tissue distribution, component of the acid-insoluble organic matrix of the aragonitic skeleton (at protein level). Initially, expressed in an aboral submarginal ring and then along calcifying septa.

It is found in the secreted. The sequence is that of Galaxin from Acropora millepora (Staghorn coral).